The sequence spans 195 residues: MTHNFLNHAPGFSYQNQAPQPQYYTRQPPSAGAHYPPNPLTPSQYVGGPSYSAGRPYQSQHAYAQPGCTSCGTGCNTGCNVQANCNIPNFYTDFKPPSFQTTYCPPSVNVGCYNTPQKTYPQTNNYRSAHNPNQFNMGFNTQVPSFNYGGGPCVTYGTPSYSQQQEPQHYYKKHKHHSHHRPKHVKSSRSCKSCN.

Disordered regions lie at residues 1–51 (MTHN…GPSY) and 160–195 (SYSQQQEPQHYYKKHKHHSHHRPKHVKSSRSCKSCN). Residues 13–28 (SYQNQAPQPQYYTRQP) show a composition bias toward polar residues. The segment covering 170-189 (YYKKHKHHSHHRPKHVKSSR) has biased composition (basic residues).

This is an uncharacterized protein from Acanthamoeba polyphaga mimivirus (APMV).